The sequence spans 243 residues: 3-deoxy-manno-octulosonate cytidylyltransferase (243 aa).

It belongs to the KdsB family.

It localises to the cytoplasm. The catalysed reaction is 3-deoxy-alpha-D-manno-oct-2-ulosonate + CTP = CMP-3-deoxy-beta-D-manno-octulosonate + diphosphate. It functions in the pathway nucleotide-sugar biosynthesis; CMP-3-deoxy-D-manno-octulosonate biosynthesis; CMP-3-deoxy-D-manno-octulosonate from 3-deoxy-D-manno-octulosonate and CTP: step 1/1. The protein operates within bacterial outer membrane biogenesis; lipopolysaccharide biosynthesis. Functionally, activates KDO (a required 8-carbon sugar) for incorporation into bacterial lipopolysaccharide in Gram-negative bacteria. The chain is 3-deoxy-manno-octulosonate cytidylyltransferase from Bartonella tribocorum (strain CIP 105476 / IBS 506).